The chain runs to 194 residues: MLLGTVVTVLSTLPAIAYAMDPESPEHEGMPQLNFANPLTTSQVVWMALILLAFYLLLSKWALPQVSQVVDDRNASIMGDLDSAHLAKAEANAAVEEMNDAIRRANLEGQAEIEKTVSAAKAKAQQEAAEAHARLERQLADAEARIASSRDTAMGALRDVATDTTQALIARLTGQFPAQDTVEQAVGQALAARS.

The chain crosses the membrane as a helical span at residues 1–21 (MLLGTVVTVLSTLPAIAYAMD).

Belongs to the ATPase B chain family. As to quaternary structure, F-type ATPases have 2 components, F(1) - the catalytic core - and F(0) - the membrane proton channel. F(1) has five subunits: alpha(3), beta(3), gamma(1), delta(1), epsilon(1). F(0) has three main subunits: a(1), b(2) and c(10-14). The alpha and beta chains form an alternating ring which encloses part of the gamma chain. F(1) is attached to F(0) by a central stalk formed by the gamma and epsilon chains, while a peripheral stalk is formed by the delta and b chains.

The protein resides in the cell inner membrane. F(1)F(0) ATP synthase produces ATP from ADP in the presence of a proton or sodium gradient. F-type ATPases consist of two structural domains, F(1) containing the extramembraneous catalytic core and F(0) containing the membrane proton channel, linked together by a central stalk and a peripheral stalk. During catalysis, ATP synthesis in the catalytic domain of F(1) is coupled via a rotary mechanism of the central stalk subunits to proton translocation. In terms of biological role, component of the F(0) channel, it forms part of the peripheral stalk, linking F(1) to F(0). The protein is ATP synthase subunit b 1 of Granulibacter bethesdensis (strain ATCC BAA-1260 / CGDNIH1).